The primary structure comprises 490 residues: N-succinylglutamate 5-semialdehyde dehydrogenase (490 aa).

224 to 229 lines the NAD(+) pocket; the sequence is GSSPTG. Active-site residues include Glu247 and Cys281.

This sequence belongs to the aldehyde dehydrogenase family. AstD subfamily.

The catalysed reaction is N-succinyl-L-glutamate 5-semialdehyde + NAD(+) + H2O = N-succinyl-L-glutamate + NADH + 2 H(+). Its pathway is amino-acid degradation; L-arginine degradation via AST pathway; L-glutamate and succinate from L-arginine: step 4/5. Catalyzes the NAD-dependent reduction of succinylglutamate semialdehyde into succinylglutamate. This is N-succinylglutamate 5-semialdehyde dehydrogenase from Hahella chejuensis (strain KCTC 2396).